Reading from the N-terminus, the 303-residue chain is Zinc transporter ZIP9-B (303 aa).

Residues 7–27 (ISLLSLAMLVGCYVSGIIPLA) traverse the membrane as a helical segment. The N-linked (GlcNAc...) asparagine glycan is linked to asparagine 29. 5 consecutive transmembrane segments (helical) span residues 35–55 (LKLVTVLGAGLLCGTALAVIV), 102–122 (AYIGVSLVLGFVFMLLVDQIG), 142–162 (ITTTLGLVVHAAADGVALGAA), 172–192 (LIVFVAIMLHKAPAAFGLVSF), and 206–226 (HLLVFALAAPLLSMLTYLGLS). N-linked (GlcNAc...) asparagine glycosylation occurs at asparagine 237. The next 2 helical transmembrane spans lie at 240-260 (GVAMLFSAGTFLYVATVHVLP) and 282-302 (LEVCALVLGCLIPLVLSIGHQ).

It belongs to the ZIP transporter (TC 2.A.5) family.

Its subcellular location is the golgi apparatus. It is found in the trans-Golgi network membrane. It localises to the cell membrane. The protein localises to the cytoplasm. The protein resides in the perinuclear region. Its subcellular location is the mitochondrion. It is found in the nucleus. It carries out the reaction Zn(2+)(in) = Zn(2+)(out). Functionally, transports zinc ions across cell and organelle membranes into the cytoplasm and regulates intracellular zinc homeostasis. Participates in the zinc ions efflux out of the secretory compartments. Regulates intracellular zinc level, resulting in the enhancement of AKT1 and MAPK3/MAPK1 (Erk1/2) phosphorylation in response to the BCR activation. Also functions as a membrane androgen receptor that mediates, through a G protein, the non-classical androgen signaling pathway, characterized by the activation of MAPK3/MAPK1 (Erk1/2) and transcription factors CREB1 or ATF1. Moreover, has dual functions as a membrane-bound androgen receptor and as an androgen-dependent zinc transporter both of which are mediated through an inhibitory G protein (Gi) that mediates both MAP kinase and zinc signaling leading to the androgen-dependent apoptotic process. The chain is Zinc transporter ZIP9-B (slc39a9-b) from Xenopus laevis (African clawed frog).